Here is a 77-residue protein sequence, read N- to C-terminus: Small ribosomal subunit protein bS18 (77 aa).

This sequence belongs to the bacterial ribosomal protein bS18 family. Part of the 30S ribosomal subunit. Forms a tight heterodimer with protein bS6.

In terms of biological role, binds as a heterodimer with protein bS6 to the central domain of the 16S rRNA, where it helps stabilize the platform of the 30S subunit. In Lactobacillus helveticus (strain DPC 4571), this protein is Small ribosomal subunit protein bS18.